The following is an 876-amino-acid chain: Alanine--tRNA ligase (876 aa).

Residues histidine 563, histidine 567, cysteine 665, and histidine 669 each coordinate Zn(2+).

It belongs to the class-II aminoacyl-tRNA synthetase family. Requires Zn(2+) as cofactor.

It is found in the cytoplasm. It catalyses the reaction tRNA(Ala) + L-alanine + ATP = L-alanyl-tRNA(Ala) + AMP + diphosphate. Catalyzes the attachment of alanine to tRNA(Ala) in a two-step reaction: alanine is first activated by ATP to form Ala-AMP and then transferred to the acceptor end of tRNA(Ala). Also edits incorrectly charged Ser-tRNA(Ala) and Gly-tRNA(Ala) via its editing domain. The sequence is that of Alanine--tRNA ligase from Shouchella clausii (strain KSM-K16) (Alkalihalobacillus clausii).